Here is a 227-residue protein sequence, read N- to C-terminus: UPF0173 metal-dependent hydrolase STK_14180 (227 aa).

It belongs to the UPF0173 family.

In Sulfurisphaera tokodaii (strain DSM 16993 / JCM 10545 / NBRC 100140 / 7) (Sulfolobus tokodaii), this protein is UPF0173 metal-dependent hydrolase STK_14180.